The sequence spans 80 residues: Styelin-C (80 aa).

Positions 1 to 22 (MQMKATILIVLVALFMIQQSEA) are cleaved as a signal peptide. Position 24 is a 6'-bromotryptophan (Trp24). The residue at position 53 (Leu53) is a Leucine amide. Residues 55–80 (DMTDEEFQEFMQDIEQAREEELLSRQ) constitute a propeptide, removed in mature form.

Its subcellular location is the secreted. Bactericidal against several Gram-positive and Gram-negative bacteria. The sequence is that of Styelin-C from Styela clava (Sea squirt).